A 423-amino-acid chain; its full sequence is Glycine amidinotransferase, mitochondrial (423 aa).

A mitochondrion-targeting transit peptide spans 1–43 (MLRVRCLRGGSRGAEALHYIGSRLGRTVTGWVQRTFQSTQAAT). Residues Ser-46 and Ser-49 each carry the phosphoserine modification. Asp-170 contributes to the arginine binding site. Residues Asp-254 and His-303 contribute to the active site. The arginine site is built by Asp-305, Arg-322, Ser-354, and Ser-355. Residue Lys-385 is modified to N6-acetyllysine. The active-site Amidino-cysteine intermediate is Cys-407.

This sequence belongs to the amidinotransferase family. In terms of assembly, homodimer. In terms of tissue distribution, kidney. Expressed biallelically in placenta.

The protein localises to the mitochondrion inner membrane. It catalyses the reaction L-arginine + glycine = guanidinoacetate + L-ornithine. The catalysed reaction is 4-aminobutanoate + L-arginine = 4-guanidinobutanoate + L-ornithine. It carries out the reaction beta-alanine + L-arginine = 3-guanidinopropanoate + L-ornithine. The enzyme catalyses taurine + L-arginine = taurocyamine + L-ornithine. The protein operates within amine and polyamine biosynthesis; creatine biosynthesis; creatine from L-arginine and glycine: step 1/2. Transamidinase that catalyzes the transfer of the amidino group of L-arginine onto the amino moiety of acceptor metabolites such as glycine, beta-alanine, gamma-aminobutyric acid (GABA) and taurine yielding the corresponding guanidine derivatives. Catalyzes the rate-limiting step of creatine biosynthesis, namely the transfer of the amidino group from L-arginine to glycine to generate guanidinoacetate, which is then methylated by GAMT to form creatine. Provides creatine as a source for ATP generation in tissues with high energy demands, in particular skeletal muscle, heart and brain. This is Glycine amidinotransferase, mitochondrial (GATM) from Sus scrofa (Pig).